The sequence spans 336 residues: Cellodextrinase A (336 aa).

Residue Glu-141 is the Proton donor of the active site.

It belongs to the glycosyl hydrolase 5 (cellulase A) family.

It localises to the secreted. Crystalline cellulose degradation. The chain is Cellodextrinase A (celA) from Ruminococcus flavefaciens.